A 188-amino-acid polypeptide reads, in one-letter code: MISISNVSKGAIIRFKGEPHSIESLMHRTPGNLRAFYQANMRNLKSGRNVEYRFSATESVDVIITERKQYQYLYRDGSDFVMMDSETFDQINVPEIAIGSASRFVKDGITVTIVFSDDASILGVELPTFVEVEVTETSPASKDDRATSGTKPAMVETGTEVSVPMFIQTGSIIRVDTRTGEYIERVKK.

This sequence belongs to the elongation factor P family.

It localises to the cytoplasm. The protein operates within protein biosynthesis; polypeptide chain elongation. In terms of biological role, involved in peptide bond synthesis. Stimulates efficient translation and peptide-bond synthesis on native or reconstituted 70S ribosomes in vitro. Probably functions indirectly by altering the affinity of the ribosome for aminoacyl-tRNA, thus increasing their reactivity as acceptors for peptidyl transferase. The polypeptide is Elongation factor P (Pelodictyon phaeoclathratiforme (strain DSM 5477 / BU-1)).